Here is a 728-residue protein sequence, read N- to C-terminus: Methylmalonyl-CoA mutase large subunit (728 aa).

Y75, M78, R82, T85, R87, Y89, and S114 together coordinate (R)-methylmalonyl-CoA. Positions 117 and 139 each coordinate cob(II)alamin. Positions 195 and 197 each coordinate (R)-methylmalonyl-CoA. V206 and R207 together coordinate cob(II)alamin. Positions 207, 244, 283, and 285 each coordinate (R)-methylmalonyl-CoA. G333, E370, A373, G609, H610, D611, R612, S655, L657, G686, and T709 together coordinate cob(II)alamin. In terms of domain architecture, B12-binding spans 597–728 (RPRILLAKMG…VKKLRASLDA (132 aa)).

Belongs to the methylmalonyl-CoA mutase family. As to quaternary structure, heterodimer of an alpha and a beta chain. It depends on adenosylcob(III)alamin as a cofactor.

The enzyme catalyses (R)-methylmalonyl-CoA = succinyl-CoA. Catalyzes the reversible conversion of succinyl-CoA to (R)-methylmalonyl-CoA through a radical mechanism. Is involved in the fermentation of pyruvate to propanoate that occurs in Propionibacteria. This Propionibacterium freudenreichii subsp. shermanii protein is Methylmalonyl-CoA mutase large subunit (mutB).